Here is a 152-residue protein sequence, read N- to C-terminus: Small ribosomal subunit protein uS8m (152 aa).

Belongs to the universal ribosomal protein uS8 family. Component of the mitochondrial small ribosomal subunit (mt-SSU). Mature yeast 74S mitochondrial ribosomes consist of a small (37S) and a large (54S) subunit. The 37S small subunit contains a 15S ribosomal RNA (15S mt-rRNA) and at least 32 different proteins. The 54S large subunit contains a 21S rRNA (21S mt-rRNA) and at least 45 different proteins.

The protein localises to the mitochondrion. In terms of biological role, component of the mitochondrial ribosome (mitoribosome), a dedicated translation machinery responsible for the synthesis of mitochondrial genome-encoded proteins, including at least some of the essential transmembrane subunits of the mitochondrial respiratory chain. The mitoribosomes are attached to the mitochondrial inner membrane and translation products are cotranslationally integrated into the membrane. The polypeptide is Small ribosomal subunit protein uS8m (mrps8) (Schizosaccharomyces pombe (strain 972 / ATCC 24843) (Fission yeast)).